Here is a 299-residue protein sequence, read N- to C-terminus: Polyamine aminopropyltransferase (299 aa).

Residues 6–252 (IVLLFALLCT…SLPNQQALQQ (247 aa)) enclose the PABS domain. Residues Gln36, Glu120, and 147 to 148 (DA) contribute to the S-methyl-5'-thioadenosine site. Asp168 (proton acceptor) is an active-site residue.

This sequence belongs to the spermidine/spermine synthase family. Homodimer or homotetramer.

The protein localises to the cytoplasm. It carries out the reaction S-adenosyl 3-(methylsulfanyl)propylamine + putrescine = S-methyl-5'-thioadenosine + spermidine + H(+). It participates in amine and polyamine biosynthesis; spermidine biosynthesis; spermidine from putrescine: step 1/1. In terms of biological role, catalyzes the irreversible transfer of a propylamine group from the amino donor S-adenosylmethioninamine (decarboxy-AdoMet) to putrescine (1,4-diaminobutane) to yield spermidine. This chain is Polyamine aminopropyltransferase, found in Vibrio vulnificus (strain CMCP6).